Here is a 486-residue protein sequence, read N- to C-terminus: Betaine aldehyde dehydrogenase (486 aa).

K(+)-binding residues include T23 and D90. Residue 147–149 coordinates NAD(+); that stretch reads GAW. K159 (charge relay system) is an active-site residue. NAD(+) is bound by residues 173 to 176 and 226 to 229; these read KPSE and ESGT. L241 is a binding site for K(+). The Proton acceptor role is filled by E247. G249, C281, and E382 together coordinate NAD(+). C281 (nucleophile) is an active-site residue. C281 is subject to Cysteine sulfenic acid (-SOH). The K(+) site is built by K452 and G455. E459 serves as the catalytic Charge relay system.

The protein belongs to the aldehyde dehydrogenase family. Dimer of dimers. K(+) serves as cofactor.

It catalyses the reaction betaine aldehyde + NAD(+) + H2O = glycine betaine + NADH + 2 H(+). It participates in amine and polyamine biosynthesis; betaine biosynthesis via choline pathway; betaine from betaine aldehyde: step 1/1. Functionally, involved in the biosynthesis of the osmoprotectant glycine betaine. Catalyzes the irreversible oxidation of betaine aldehyde to the corresponding acid. The protein is Betaine aldehyde dehydrogenase of Vibrio parahaemolyticus serotype O3:K6 (strain RIMD 2210633).